A 226-amino-acid chain; its full sequence is uncharacterized protein (226 aa).

To L.innocua lin1255, lin1742 and lin2408.

This is an uncharacterized protein from Listeria innocua serovar 6a (strain ATCC BAA-680 / CLIP 11262).